We begin with the raw amino-acid sequence, 289 residues long: Fatty acid elongase 1 (289 aa).

The next 7 helical transmembrane spans lie at 22–42 (VVGY…KLFA), 72–92 (AMVL…STVT), 123–143 (FWIG…IFLV), 152–172 (FLHW…YCVG), 177–197 (IWVA…FAIA), 208–228 (WAPY…FVTL), and 251–271 (LLMY…AHVL). Residues 154–158 (HWYHH) carry the HxxHH motif motif. The active-site Nucleophile is the H157. An N-linked (GlcNAc...) asparagine glycan is attached at N282.

It belongs to the ELO family.

Its subcellular location is the endoplasmic reticulum membrane. The enzyme catalyses an acyl-CoA + malonyl-CoA + H(+) = a 3-oxoacyl-CoA + CO2 + CoA. Its pathway is lipid metabolism; fatty acid biosynthesis. In terms of biological role, involved in the synthesis of fatty acids. Elongates C4 fatty acids. Required for the normal mitochondrial function, energy metabolism and growth of epimastigotes. This Trypanosoma cruzi (strain CL Brener) protein is Fatty acid elongase 1.